The following is a 909-amino-acid chain: WD repeat-containing protein 20 homolog (909 aa).

The segment at 58 to 132 (SPAQGKLGSD…SAGNNTVEAR (75 aa)) is disordered. Composition is skewed to low complexity over residues 80–107 (GANT…AISN) and 115–127 (SHSN…AGNN). WD repeat units follow at residues 248-288 (IDKT…AATA), 321-362 (TDNC…GIAR), 363-402 (SYFG…VVAR), and 470-517 (ADRN…LRHP). Disordered regions lie at residues 458 to 483 (FEGF…FRSD), 554 to 628 (SGQA…AGSV), 661 to 699 (SDSI…NSGS), 720 to 739 (SEKK…RQHR), and 749 to 775 (NQHN…GHSS). 2 stretches are compositionally biased toward polar residues: residues 555-569 (GQAT…SCSP) and 595-606 (TANCTISSQSSP). Composition is skewed to low complexity over residues 612-628 (EAAT…AGSV) and 673-699 (GQRP…NSGS). A WD 5 repeat occupies 856–893 (IAHERLTALIFREDCFLTACQDGFIYTWARPGHATHAT).

As to quaternary structure, component of the Usp12-46 deubiquitylase complex consisting of Usp12-46, Wdr20 and Uaf1; regulatory subunit that, together with Uaf1, stabilizes Usp12-46. The Usp12-46 deubiquitylase complex associates with arr/arrow; the interaction leads to deubiquitination and stabilization of arr/arrow.

Its function is as follows. Regulatory component of the Usp12-46 deubiquitylase complex. This complex deubiquitylates the wg/wingless-signaling receptor arr/arrow, which stabilizes the receptor and increases its concentration at the cell surface; this enhances the sensitivity of cells to wg/wingless-signal stimulation. This increases the amplitude and spatial range of the signaling response to the wg/wingless morphogen gradient, facilitating the precise concentration-dependent regulation of its target genes. Required for wg/wingless-mediated signaling in the wing imaginal disc and for wg/wingless-dependent regulation of intestinal stem cell proliferation. The sequence is that of WD repeat-containing protein 20 homolog from Drosophila melanogaster (Fruit fly).